Here is a 180-residue protein sequence, read N- to C-terminus: Uterocalin (180 aa).

A signal peptide spans M1 to A18. The cysteines at positions 82 and 175 are disulfide-linked. N-linked (GlcNAc...) asparagine glycosylation is present at N101.

Belongs to the calycin superfamily. Lipocalin family. As to expression, expressed in glandular and lumenal epithelia of the endometrium. Is transferred to the embryonic capsule, the conceptus and the yolk sac.

Its subcellular location is the secreted. In terms of biological role, binds fatty acids and retinol. Is specialized for the preattachment embryo. May be important to maintain the pregnancy and may transport small hydrophobic ligands from mother to the developing embryo. This Equus caballus (Horse) protein is Uterocalin.